The chain runs to 158 residues: Snaclec agglucetin subunit alpha-2 (158 aa).

The N-terminal stretch at 1-23 is a signal peptide; the sequence is MGRFIFVSFGLLVVFLSLSGTGA. 3 cysteine pairs are disulfide-bonded: Cys-27/Cys-38, Cys-55/Cys-152, and Cys-127/Cys-144. The region spanning 34 to 153 is the C-type lectin domain; that stretch reads YDQYCYQVIK…CIQLNPFVCK (120 aa).

This sequence belongs to the snaclec family. In terms of assembly, heterotetramer of the subunits alpha-1, alpha-2, beta-1 and beta-2; disulfide-linked. In terms of tissue distribution, expressed by the venom gland.

The protein localises to the secreted. Functionally, agglucetin specifically causes platelet aggregation and surface exposure of integrin alpha-IIb/beta-3 with a GPIb-(GP1BA-) dependent manner in washed platelets. It binds to human platelets in a saturable manner, and its binding is specifically blocked by anti-GP Ib mAb. It regulates endothelial cell survival and promotes angiogenesis by activating integrin alpha-v/beta-3 signaling through FAK/phosphatidylinositol 3-kinase (PI3K)/Akt pathway. This is Snaclec agglucetin subunit alpha-2 from Deinagkistrodon acutus (Hundred-pace snake).